A 299-amino-acid polypeptide reads, in one-letter code: Ribosomal RNA small subunit methyltransferase H (299 aa).

Residues 24-26 (GGH), D43, F68, D90, and Q97 contribute to the S-adenosyl-L-methionine site.

Belongs to the methyltransferase superfamily. RsmH family.

The protein localises to the cytoplasm. It catalyses the reaction cytidine(1402) in 16S rRNA + S-adenosyl-L-methionine = N(4)-methylcytidine(1402) in 16S rRNA + S-adenosyl-L-homocysteine + H(+). In terms of biological role, specifically methylates the N4 position of cytidine in position 1402 (C1402) of 16S rRNA. This is Ribosomal RNA small subunit methyltransferase H from Francisella tularensis subsp. tularensis (strain WY96-3418).